The chain runs to 361 residues: MSFAVARMTKLKADNLVGIGNHDQRKTTNHSNEDIDVSRSHLNYDLVAGRTDNFKTDIEAYINENKASKRAVRKDAVLVNEWIITSDKDFFEQLDEAETRKYFETAKQYFADNYGDENIRYAVVHMDEKTPHMHMGIVPFDDDKKLSAKRIFNREALQHIQEELPQYLKENGFDVQRGNKNKERKNLSVPEYKAMREELKKIETEKQETQAKLADTKKQLDEIKPRDTKKIASKPTLMNKNKVTVDKSDLADLEQRAVTSDAYNFEKIHLEVGNHSLRNDLSEAKGRNYELRKENERLQKLVGTLQGIIRNVDEFLHKKLGINLPEKWLERAGLKEPSKKAPESSQELDRHKSDELGGPHL.

Residues Tyr-44 and Tyr-114 each contribute to the DNA site. The segment at 331 to 361 is disordered; it reads RAGLKEPSKKAPESSQELDRHKSDELGGPHL.

Belongs to the plasmid mobilization pre family.

The interaction of the RSA site and the pre protein may not only serve a function in plasmid maintenance, but also contribute to the distribution of small antibiotic resistance plasmids among Gram-positive bacteria. The polypeptide is Plasmid recombination enzyme (preA) (Lactiplantibacillus plantarum (Lactobacillus plantarum)).